The primary structure comprises 109 residues: Cell division protein ZapA (109 aa).

Residues 21 to 100 (PDQRDALNQA…EQALLERGRI (80 aa)) adopt a coiled-coil conformation.

Belongs to the ZapA family. Type 1 subfamily. Homodimer. Interacts with FtsZ.

The protein resides in the cytoplasm. In terms of biological role, activator of cell division through the inhibition of FtsZ GTPase activity, therefore promoting FtsZ assembly into bundles of protofilaments necessary for the formation of the division Z ring. It is recruited early at mid-cell but it is not essential for cell division. This is Cell division protein ZapA from Shigella dysenteriae serotype 1 (strain Sd197).